The primary structure comprises 555 residues: Dihydroxy-acid dehydratase (555 aa).

Position 78 (Asp-78) interacts with Mg(2+). Cys-119 is a binding site for [2Fe-2S] cluster. The Mg(2+) site is built by Asp-120 and Lys-121. The residue at position 121 (Lys-121) is an N6-carboxylysine. Cys-191 provides a ligand contact to [2Fe-2S] cluster. A Mg(2+)-binding site is contributed by Glu-444. Ser-470 functions as the Proton acceptor in the catalytic mechanism.

The protein belongs to the IlvD/Edd family. As to quaternary structure, homodimer. The cofactor is [2Fe-2S] cluster. It depends on Mg(2+) as a cofactor.

The catalysed reaction is (2R)-2,3-dihydroxy-3-methylbutanoate = 3-methyl-2-oxobutanoate + H2O. The enzyme catalyses (2R,3R)-2,3-dihydroxy-3-methylpentanoate = (S)-3-methyl-2-oxopentanoate + H2O. The protein operates within amino-acid biosynthesis; L-isoleucine biosynthesis; L-isoleucine from 2-oxobutanoate: step 3/4. Its pathway is amino-acid biosynthesis; L-valine biosynthesis; L-valine from pyruvate: step 3/4. In terms of biological role, functions in the biosynthesis of branched-chain amino acids. Catalyzes the dehydration of (2R,3R)-2,3-dihydroxy-3-methylpentanoate (2,3-dihydroxy-3-methylvalerate) into 2-oxo-3-methylpentanoate (2-oxo-3-methylvalerate) and of (2R)-2,3-dihydroxy-3-methylbutanoate (2,3-dihydroxyisovalerate) into 2-oxo-3-methylbutanoate (2-oxoisovalerate), the penultimate precursor to L-isoleucine and L-valine, respectively. The polypeptide is Dihydroxy-acid dehydratase (Oleidesulfovibrio alaskensis (strain ATCC BAA-1058 / DSM 17464 / G20) (Desulfovibrio alaskensis)).